The sequence spans 416 residues: Neamine transaminase NeoN (416 aa).

K231 carries the post-translational modification N6-(pyridoxal phosphate)lysine.

It belongs to the class-III pyridoxal-phosphate-dependent aminotransferase family. Pyridoxal 5'-phosphate serves as cofactor.

It carries out the reaction neomycin C + 2-oxoglutarate = 6'''-deamino-6'''-oxoneomycin C + L-glutamate. The enzyme catalyses neamine + 2-oxoglutarate = 6'-oxoparomamine + L-glutamate. The protein operates within antibiotic biosynthesis; neomycin biosynthesis. In terms of biological role, 6'-oxoglucosaminyl:L-glutamate aminotransferase that catalyzes pyridoxal-5'-phosphate-mediated transamination for the conversion of paromamine to neamine in the biosynthetic pathway of neomycin. Also able to catalyze deamination at C-6''' of neomycin. In Streptomyces fradiae (Streptomyces roseoflavus), this protein is Neamine transaminase NeoN (neoN).